A 126-amino-acid polypeptide reads, in one-letter code: Bactofilin BacO (126 aa).

Belongs to the bactofilin family. In terms of assembly, interacts with BacN and probably also BacP, the 3 proteins colocalize as an extended structure. Interacts with PadC.

Its subcellular location is the cytoplasm. The protein localises to the cytoskeleton. Its function is as follows. A non-essential component of the chromosome segregation machinery. Positions the ParA-ParB-parS chromosome segregation machinery within the cell; BacP seems to be the most important bactofilin in this process. Forms a heteropolymeric, subpolar scaffold in the cell; BacP probably forms the core, BacO contributes to position and integrity while BacN does not seem to contribute to assembly. This Myxococcus xanthus (strain DK1622) protein is Bactofilin BacO.